A 312-amino-acid chain; its full sequence is Acetyl-coenzyme A carboxylase carboxyl transferase subunit alpha (312 aa).

The region spanning 36 to 286 is the CoA carboxyltransferase C-terminal domain; it reads NLEKEISKTY…ADYVKKSLNE (251 aa).

It belongs to the AccA family. In terms of assembly, acetyl-CoA carboxylase is a heterohexamer composed of biotin carboxyl carrier protein (AccB), biotin carboxylase (AccC) and two subunits each of ACCase subunit alpha (AccA) and ACCase subunit beta (AccD).

The protein resides in the cytoplasm. It carries out the reaction N(6)-carboxybiotinyl-L-lysyl-[protein] + acetyl-CoA = N(6)-biotinyl-L-lysyl-[protein] + malonyl-CoA. The protein operates within lipid metabolism; malonyl-CoA biosynthesis; malonyl-CoA from acetyl-CoA: step 1/1. Component of the acetyl coenzyme A carboxylase (ACC) complex. First, biotin carboxylase catalyzes the carboxylation of biotin on its carrier protein (BCCP) and then the CO(2) group is transferred by the carboxyltransferase to acetyl-CoA to form malonyl-CoA. The protein is Acetyl-coenzyme A carboxylase carboxyl transferase subunit alpha of Campylobacter jejuni (strain RM1221).